A 241-amino-acid chain; its full sequence is Tetraspanin-1 (241 aa).

At 1 to 11 (MQCFSFIKTMM) the chain is on the cytoplasmic side. Residues 12-32 (ILFNLLIFLCGAALLAVGIWV) form a helical membrane-spanning segment. Topologically, residues 33 to 52 (SIDGASFLKIFGPLSSSAMQ) are extracellular. The helical transmembrane segment at 53 to 73 (FVNVGYFLIAAGVVVFALGFL) threads the bilayer. Residues 74–88 (GCYGAKTESKCALVT) lie on the Cytoplasmic side of the membrane. Residues 89–109 (FFFILLLIFIAEVAAAVVALV) traverse the membrane as a helical segment. Over 110–211 (YTTMAEHFLT…NQLLYDIRTN (102 aa)) the chain is Extracellular. 4 N-linked (GlcNAc...) asparagine glycosylation sites follow: asparagine 141, asparagine 154, asparagine 178, and asparagine 184. A helical membrane pass occupies residues 212 to 232 (AVTVGGVAAGIGGLELAAMIV). The Cytoplasmic segment spans residues 233-241 (SMYLYCNLQ).

This sequence belongs to the tetraspanin (TM4SF) family. As to quaternary structure, interacts with SLC19A2. Interacts with NTRK1/TRKA.

The protein localises to the cell membrane. It localises to the lysosome membrane. In terms of biological role, structural component of specialized membrane microdomains known as tetraspanin-enriched microdomains (TERMs), which act as platforms for receptor clustering and signaling. Participates thereby in diverse biological functions such as cell signal transduction, adhesion, migration and protein trafficking. Regulates neuronal differentiation in response to NGF by facilitating NGF-mediated activation of NTRK1/TRKA receptor tyrosine kinase and subsequent downstream signaling pathways. Plays a role in the inhibition of TNFalpha-induced apoptosis. Mechanistically, inhibits the NF-kappa-B signaling pathway by blocking phosphorylation of CHUK. Also promotes the stability of the thiamine transporter 1/SLC19A2 in intestinal epithelial cells leading to an increase of thiamine uptake process. The sequence is that of Tetraspanin-1 (TSPAN1) from Homo sapiens (Human).